The following is a 72-amino-acid chain: Translation initiation factor IF-1 (72 aa).

One can recognise an S1-like domain in the interval 1–72 (MAKEDTLEFP…SKGRINYRFK (72 aa)).

It belongs to the IF-1 family. As to quaternary structure, component of the 30S ribosomal translation pre-initiation complex which assembles on the 30S ribosome in the order IF-2 and IF-3, IF-1 and N-formylmethionyl-tRNA(fMet); mRNA recruitment can occur at any time during PIC assembly.

The protein localises to the cytoplasm. Functionally, one of the essential components for the initiation of protein synthesis. Stabilizes the binding of IF-2 and IF-3 on the 30S subunit to which N-formylmethionyl-tRNA(fMet) subsequently binds. Helps modulate mRNA selection, yielding the 30S pre-initiation complex (PIC). Upon addition of the 50S ribosomal subunit IF-1, IF-2 and IF-3 are released leaving the mature 70S translation initiation complex. This chain is Translation initiation factor IF-1, found in Cereibacter sphaeroides (strain ATCC 17029 / ATH 2.4.9) (Rhodobacter sphaeroides).